Here is a 637-residue protein sequence, read N- to C-terminus: DEAD-box ATP-dependent RNA helicase 37 (637 aa).

Disordered regions lie at residues 1 to 68 (MRSS…QPSA) and 86 to 141 (GPAS…EEAT). Composition is skewed to low complexity over residues 10 to 28 (ANAE…PVAN) and 46 to 68 (GQAP…QPSA). Positions 104-116 (GGRGGGGGGGGGW) are enriched in gly residues. The short motif at 174–202 (NTFAEIDLGDALNENIRRCKYVKPTPVQR) is the Q motif element. One can recognise a Helicase ATP-binding domain in the interval 205-389 (IPISIAGRDL…SDFLADYIFL (185 aa)). Position 218-225 (218-225 (AQTGSGKT)) interacts with ATP. A DEAD box motif is present at residues 333–336 (DEAD). Residues 416 to 567 (YLMDLLHAQK…EVPQWLERYS (152 aa)) form the Helicase C-terminal domain. A disordered region spans residues 570–610 (SSFGGGGGRNRRSGGARFGGRDFRRDNRGGGGGGYGGGGGG). Residues 588 to 597 (GGRDFRRDNR) are compositionally biased toward basic and acidic residues. Residues 598 to 610 (GGGGGGYGGGGGG) are compositionally biased toward gly residues.

Belongs to the DEAD box helicase family. DDX3/DED1 subfamily.

It carries out the reaction ATP + H2O = ADP + phosphate + H(+). The chain is DEAD-box ATP-dependent RNA helicase 37 (PL10A) from Oryza sativa subsp. japonica (Rice).